We begin with the raw amino-acid sequence, 255 residues long: Hemin import ATP-binding protein HmuV (255 aa).

Positions 2 to 238 (LRVENLHVRR…EPLKAVFGLE (237 aa)) constitute an ABC transporter domain. 34-41 (GPNGAGKS) lines the ATP pocket.

The protein belongs to the ABC transporter superfamily. Heme (hemin) importer (TC 3.A.1.14.5) family. As to quaternary structure, the complex is composed of two ATP-binding proteins (HmuV), two transmembrane proteins (HmuU) and a solute-binding protein (HmuT).

The protein resides in the cell inner membrane. Functionally, part of the ABC transporter complex HmuTUV involved in hemin import. Responsible for energy coupling to the transport system. This chain is Hemin import ATP-binding protein HmuV, found in Pseudomonas fluorescens (strain ATCC BAA-477 / NRRL B-23932 / Pf-5).